Reading from the N-terminus, the 262-residue chain is Tetrahydromethanopterin S-methyltransferase subunit C (262 aa).

The next 6 membrane-spanning stretches (helical) occupy residues 35-57 (FVPSLAMLIGGLLAAGACVAGAN), 70-92 (GVPSIGMVSLGMGTISALAGVLI), 97-119 (GLPVLATPILAAVIAVVVGFIVG), 140-162 (LSLMGALAILGFCTAFAGGFSAD), 172-194 (GVIALAFIAAGMSILHPFNACIG), and 214-236 (WLIFSIAKLDIVSIVVAAIFWLY).

The protein belongs to the MtrC family. In terms of assembly, the complex is composed of 8 subunits; MtrA, MtrB, MtrC, MtrD, MtrE, MtrF, MtrG and MtrH.

Its subcellular location is the cell membrane. It catalyses the reaction 5-methyl-5,6,7,8-tetrahydromethanopterin + coenzyme M + 2 Na(+)(in) = 5,6,7,8-tetrahydromethanopterin + methyl-coenzyme M + 2 Na(+)(out). Its pathway is one-carbon metabolism; methanogenesis from CO(2); methyl-coenzyme M from 5,10-methylene-5,6,7,8-tetrahydromethanopterin: step 2/2. Functionally, part of a complex that catalyzes the formation of methyl-coenzyme M and tetrahydromethanopterin from coenzyme M and methyl-tetrahydromethanopterin. This is an energy-conserving, sodium-ion translocating step. This chain is Tetrahydromethanopterin S-methyltransferase subunit C, found in Methanococcus maripaludis (strain DSM 14266 / JCM 13030 / NBRC 101832 / S2 / LL).